We begin with the raw amino-acid sequence, 548 residues long: Lipase 2 (548 aa).

The first 14 residues, 1–14, serve as a signal peptide directing secretion; that stretch reads MKLCLLALGAAVAA. A disulfide bridge links C74 with C111. Residue S223 is the Acyl-ester intermediate of the active site. Cysteines 282 and 291 form a disulfide. The active-site Charge relay system is E355. N-linked (GlcNAc...) asparagine glycosylation is present at N365. The active-site Charge relay system is the H463.

The protein belongs to the type-B carboxylesterase/lipase family.

The catalysed reaction is a triacylglycerol + H2O = a diacylglycerol + a fatty acid + H(+). This chain is Lipase 2 (LIP2), found in Diutina rugosa (Yeast).